Consider the following 850-residue polypeptide: Pro-neuregulin-2, membrane-bound isoform (850 aa).

A disordered region spans residues 1-96; it reads MRQVCCSALP…AAAAGGMRRD (96 aa). The propeptide occupies 1-111; it reads MRQVCCSALP…SMLLFGVSLA (111 aa). Over residues 20–59 the composition is skewed to low complexity; the sequence is SSYSDSSSSSSERSSSSSSSSSESGSSSRSSSNNSSISRP. 2 N-linked (GlcNAc...) asparagine glycosylation sites follow: N52 and N53. A compositionally biased stretch (pro residues) spans 60–74; that stretch reads AAPPEPRPQQQPQPR. Low complexity predominate over residues 75 to 92; the sequence is SPAARRAAARSRAAAAGG. Residues 112 to 405 lie on the Extracellular side of the membrane; that stretch reads CYSPSLKSVQ…QKAEELYQKR (294 aa). Residues N147, N278, and N346 are each glycosylated (N-linked (GlcNAc...) asparagine). The region spanning 237 to 332 is the Ig-like C2-type domain; that stretch reads PKLKKMKSQT…RGRLYVNSVS (96 aa). Disulfide bonds link C257–C311, C345–C359, C353–C370, and C372–C381. Positions 341 to 382 constitute an EGF-like domain; that stretch reads HARKCNETAKSYCVNGGVCYYIEGINQLSCKCPNGFFGQRCL. Residues 406–426 form a helical membrane-spanning segment; it reads VLTITGICVALLVVGIVCVVA. Residues 427-850 are Cytoplasmic-facing; sequence YCKTKKQRKQ…PRAKQDSAPL (424 aa). 5 disordered regions span residues 492–535, 566–585, 647–681, 700–788, and 801–850; these read TFSG…DSQS, EERRRATAPPYHDSVDSLRD, LLRHPAPPGPGPGPGPGPGPGADMQRSYDSYYYPA, LPAS…DGAL, and AHDA…SAPL. The segment covering 494-506 has biased composition (low complexity); that stretch reads SGSHSCSPSHHCS. The segment covering 514–527 has biased composition (basic and acidic residues); the sequence is HRHESHTWSLERSE. Over residues 651-665 the composition is skewed to pro residues; the sequence is PAPPGPGPGPGPGPG. A compositionally biased stretch (low complexity) spans 750–767; the sequence is GLAAQRARAARDSLSLSS.

It belongs to the neuregulin family. In terms of assembly, interacts with ERBB3 and ERBB4. Post-translationally, proteolytic cleavage close to the plasma membrane on the external face leads to the release of the soluble growth factor form. In terms of processing, extensive glycosylation precedes the proteolytic cleavage. In terms of tissue distribution, restricted to the cerebellum in the adult.

It localises to the cell membrane. It is found in the secreted. Direct ligand for ERBB3 and ERBB4 tyrosine kinase receptors. Concomitantly recruits ERBB1 and ERBB2 coreceptors, resulting in ligand-stimulated tyrosine phosphorylation and activation of the ERBB receptors. May also promote the heterodimerization with the EGF receptor. The polypeptide is Pro-neuregulin-2, membrane-bound isoform (NRG2) (Homo sapiens (Human)).